Consider the following 104-residue polypeptide: Ribonuclease P protein component 4 (104 aa).

Zn(2+) is bound by residues Cys57, Cys60, Cys83, and Cys86.

This sequence belongs to the eukaryotic/archaeal RNase P protein component 4 family. Consists of a catalytic RNA component and at least 4-5 protein subunits. The cofactor is Zn(2+).

The protein localises to the cytoplasm. The enzyme catalyses Endonucleolytic cleavage of RNA, removing 5'-extranucleotides from tRNA precursor.. Functionally, part of ribonuclease P, a protein complex that generates mature tRNA molecules by cleaving their 5'-ends. The protein is Ribonuclease P protein component 4 of Saccharolobus islandicus (strain L.S.2.15 / Lassen #1) (Sulfolobus islandicus).